The sequence spans 69 residues: Cytochrome c oxidase subunit 8A, mitochondrial (69 aa).

Residues 1-25 constitute a mitochondrion transit peptide; that stretch reads MSVLTPLLLRGLTGSARRLPVPRAQ. The SIFI-degron signature appears at 2–19; the sequence is SVLTPLLLRGLTGSARRL. Over 26–36 the chain is Mitochondrial matrix; sequence VHSMPPEQKLG. Residues 37 to 60 form a helical membrane-spanning segment; the sequence is VLELAIGFTSCLVTFLLPAGWILS. At 61–69 the chain is on the mitochondrial intermembrane side; it reads HLDSYKKRG.

It belongs to the cytochrome c oxidase VIII family. In terms of assembly, component of the cytochrome c oxidase (complex IV, CIV), a multisubunit enzyme composed of 14 subunits. The complex is composed of a catalytic core of 3 subunits MT-CO1, MT-CO2 and MT-CO3, encoded in the mitochondrial DNA, and 11 supernumerary subunits COX4I, COX5A, COX5B, COX6A, COX6B, COX6C, COX7A, COX7B, COX7C, COX8 and NDUFA4, which are encoded in the nuclear genome. The complex exists as a monomer or a dimer and forms supercomplexes (SCs) in the inner mitochondrial membrane with NADH-ubiquinone oxidoreductase (complex I, CI) and ubiquinol-cytochrome c oxidoreductase (cytochrome b-c1 complex, complex III, CIII), resulting in different assemblies (supercomplex SCI(1)III(2)IV(1) and megacomplex MCI(2)III(2)IV(2)). In terms of processing, in response to mitochondrial stress, the precursor protein is ubiquitinated by the SIFI complex in the cytoplasm before mitochondrial import, leading to its degradation. Within the SIFI complex, UBR4 initiates ubiquitin chain that are further elongated or branched by KCMF1.

It is found in the mitochondrion inner membrane. Its pathway is energy metabolism; oxidative phosphorylation. In terms of biological role, component of the cytochrome c oxidase, the last enzyme in the mitochondrial electron transport chain which drives oxidative phosphorylation. The respiratory chain contains 3 multisubunit complexes succinate dehydrogenase (complex II, CII), ubiquinol-cytochrome c oxidoreductase (cytochrome b-c1 complex, complex III, CIII) and cytochrome c oxidase (complex IV, CIV), that cooperate to transfer electrons derived from NADH and succinate to molecular oxygen, creating an electrochemical gradient over the inner membrane that drives transmembrane transport and the ATP synthase. Cytochrome c oxidase is the component of the respiratory chain that catalyzes the reduction of oxygen to water. Electrons originating from reduced cytochrome c in the intermembrane space (IMS) are transferred via the dinuclear copper A center (CU(A)) of subunit 2 and heme A of subunit 1 to the active site in subunit 1, a binuclear center (BNC) formed by heme A3 and copper B (CU(B)). The BNC reduces molecular oxygen to 2 water molecules using 4 electrons from cytochrome c in the IMS and 4 protons from the mitochondrial matrix. The polypeptide is Cytochrome c oxidase subunit 8A, mitochondrial (COX8A) (Saimiri sciureus (Common squirrel monkey)).